A 301-amino-acid polypeptide reads, in one-letter code: GTPase Era (301 aa).

An Era-type G domain is found at 7-173 (KSGFVALLGR…LNTINKYLPE (167 aa)). The segment at 15 to 22 (GRPNVGKS) is G1. Position 15–22 (15–22 (GRPNVGKS)) interacts with GTP. The segment at 41-45 (QTTRN) is G2. The G3 stretch occupies residues 62–65 (DTPG). GTP is bound by residues 62–66 (DTPGI) and 123–126 (NKVD). Positions 123 to 126 (NKVD) are G4. The tract at residues 152–154 (ISA) is G5. Residues 204 to 281 (TSQEVPHATA…NLRLWVKVQH (78 aa)) enclose the KH type-2 domain.

The protein belongs to the TRAFAC class TrmE-Era-EngA-EngB-Septin-like GTPase superfamily. Era GTPase family. In terms of assembly, monomer.

The protein localises to the cytoplasm. It is found in the cell membrane. Its function is as follows. An essential GTPase that binds both GDP and GTP, with rapid nucleotide exchange. Plays a role in 16S rRNA processing and 30S ribosomal subunit biogenesis and possibly also in cell cycle regulation and energy metabolism. This Lactobacillus helveticus (strain DPC 4571) protein is GTPase Era.